The following is a 683-amino-acid chain: Elongation factor G-like protein (683 aa).

Positions 5–267 constitute a tr-type G domain; the sequence is QNVRSAALIG…YLGDIGVSPE (263 aa). Residues 14–21, 73–77, and 127–130 contribute to the GTP site; these read GHNGSGKS, DTPGF, and NQMD.

Belongs to the TRAFAC class translation factor GTPase superfamily. Classic translation factor GTPase family. EF-G/EF-2 subfamily.

In Thermotoga maritima (strain ATCC 43589 / DSM 3109 / JCM 10099 / NBRC 100826 / MSB8), this protein is Elongation factor G-like protein.